We begin with the raw amino-acid sequence, 100 residues long: Urease subunit gamma (100 aa).

The protein belongs to the urease gamma subunit family. As to quaternary structure, heterotrimer of UreA (gamma), UreB (beta) and UreC (alpha) subunits. Three heterotrimers associate to form the active enzyme.

It localises to the cytoplasm. The enzyme catalyses urea + 2 H2O + H(+) = hydrogencarbonate + 2 NH4(+). It participates in nitrogen metabolism; urea degradation; CO(2) and NH(3) from urea (urease route): step 1/1. Expression of the urease operon increases the likelihood of bacterial survival by contributing to acid resistance in vitro and in vivo in BALB/c mice. Y.enterocolitica enters the body via an oral path and must survive the acidic stomach before being able to colonize the intestinal mucosa. The chain is Urease subunit gamma from Yersinia enterocolitica.